The sequence spans 249 residues: 5'-nucleotidase SurE (249 aa).

A divalent metal cation contacts are provided by aspartate 8, aspartate 9, serine 39, and asparagine 91.

The protein belongs to the SurE nucleotidase family. It depends on a divalent metal cation as a cofactor.

It localises to the cytoplasm. It carries out the reaction a ribonucleoside 5'-phosphate + H2O = a ribonucleoside + phosphate. Functionally, nucleotidase that shows phosphatase activity on nucleoside 5'-monophosphates. The chain is 5'-nucleotidase SurE from Pseudomonas entomophila (strain L48).